Here is a 603-residue protein sequence, read N- to C-terminus: DNA mismatch repair protein MutL (603 aa).

Positions 336–346 (EVSKKQKEQQK) are enriched in basic and acidic residues. A disordered region spans residues 336 to 372 (EVSKKQKEQQKSEQIQMSFEENRQPKEPPTLFSKPNI).

This sequence belongs to the DNA mismatch repair MutL/HexB family.

Its function is as follows. This protein is involved in the repair of mismatches in DNA. It is required for dam-dependent methyl-directed DNA mismatch repair. May act as a 'molecular matchmaker', a protein that promotes the formation of a stable complex between two or more DNA-binding proteins in an ATP-dependent manner without itself being part of a final effector complex. The sequence is that of DNA mismatch repair protein MutL from Listeria innocua serovar 6a (strain ATCC BAA-680 / CLIP 11262).